A 321-amino-acid polypeptide reads, in one-letter code: Aspartate carbamoyltransferase catalytic subunit (321 aa).

Residues arginine 65 and threonine 66 each coordinate carbamoyl phosphate. An L-aspartate-binding site is contributed by lysine 93. Residues arginine 115, histidine 143, and glutamine 146 each coordinate carbamoyl phosphate. Residues arginine 176 and arginine 230 each coordinate L-aspartate. Residues glycine 271 and proline 272 each coordinate carbamoyl phosphate.

The protein belongs to the aspartate/ornithine carbamoyltransferase superfamily. ATCase family. Heterododecamer (2C3:3R2) of six catalytic PyrB chains organized as two trimers (C3), and six regulatory PyrI chains organized as three dimers (R2).

It carries out the reaction carbamoyl phosphate + L-aspartate = N-carbamoyl-L-aspartate + phosphate + H(+). The protein operates within pyrimidine metabolism; UMP biosynthesis via de novo pathway; (S)-dihydroorotate from bicarbonate: step 2/3. Functionally, catalyzes the condensation of carbamoyl phosphate and aspartate to form carbamoyl aspartate and inorganic phosphate, the committed step in the de novo pyrimidine nucleotide biosynthesis pathway. The polypeptide is Aspartate carbamoyltransferase catalytic subunit (Bartonella tribocorum (strain CIP 105476 / IBS 506)).